The primary structure comprises 264 residues: 3-methyl-2-oxobutanoate hydroxymethyltransferase (264 aa).

Mg(2+)-binding residues include D45 and D84. Residues 45 to 46 (DS), D84, and K112 each bind 3-methyl-2-oxobutanoate. E114 is a binding site for Mg(2+). E181 serves as the catalytic Proton acceptor.

This sequence belongs to the PanB family. As to quaternary structure, homodecamer; pentamer of dimers. Mg(2+) serves as cofactor.

The protein resides in the cytoplasm. The catalysed reaction is 3-methyl-2-oxobutanoate + (6R)-5,10-methylene-5,6,7,8-tetrahydrofolate + H2O = 2-dehydropantoate + (6S)-5,6,7,8-tetrahydrofolate. It functions in the pathway cofactor biosynthesis; (R)-pantothenate biosynthesis; (R)-pantoate from 3-methyl-2-oxobutanoate: step 1/2. Its function is as follows. Catalyzes the reversible reaction in which hydroxymethyl group from 5,10-methylenetetrahydrofolate is transferred onto alpha-ketoisovalerate to form ketopantoate. This Escherichia coli O17:K52:H18 (strain UMN026 / ExPEC) protein is 3-methyl-2-oxobutanoate hydroxymethyltransferase.